Here is an 877-residue protein sequence, read N- to C-terminus: Translation initiation factor IF-2 (877 aa).

The segment covering 66-115 (PKKESTAKKTTKKDEVKKEEKKTTTKKESKNPAKAVSEKKDEVKKEEKQP) has biased composition (basic and acidic residues). Disordered regions lie at residues 66–127 (PKKE…LEEK), 187–208 (SDESLKRKKKEKKNHPVASKKE), and 241–290 (ENKP…KESE). Basic residues predominate over residues 192–201 (KRKKKEKKNH). Over residues 245 to 265 (AQPTNKKQPNILKQSLNNSIN) the composition is skewed to polar residues. Residues 376 to 543 (QRAPVITIMG…IVLLQADILE (168 aa)) enclose the tr-type G domain. The segment at 385–392 (GHVDHGKT) is G1. Residue 385–392 (GHVDHGKT) participates in GTP binding. The G2 stretch occupies residues 410–414 (GITQH). The G3 stretch occupies residues 431 to 434 (DTPG). Residues 431-435 (DTPGH) and 485-488 (NKMD) contribute to the GTP site. The segment at 485–488 (NKMD) is G4. The segment at 521–523 (SAK) is G5.

Belongs to the TRAFAC class translation factor GTPase superfamily. Classic translation factor GTPase family. IF-2 subfamily.

The protein localises to the cytoplasm. Its function is as follows. One of the essential components for the initiation of protein synthesis. Protects formylmethionyl-tRNA from spontaneous hydrolysis and promotes its binding to the 30S ribosomal subunits. Also involved in the hydrolysis of GTP during the formation of the 70S ribosomal complex. This is Translation initiation factor IF-2 from Campylobacter lari (strain RM2100 / D67 / ATCC BAA-1060).